The following is an 88-amino-acid chain: Small ribosomal subunit protein uS15c (88 aa).

It belongs to the universal ribosomal protein uS15 family. Part of the 30S ribosomal subunit.

It localises to the plastid. The protein resides in the chloroplast. The chain is Small ribosomal subunit protein uS15c (rps15) from Arabidopsis thaliana (Mouse-ear cress).